The following is a 393-amino-acid chain: Serine/threonine-protein kinase US3 homolog (393 aa).

In terms of domain architecture, Protein kinase spans 93–378 (FVILKTFTPG…AEVLLNHSVF (286 aa)). ATP contacts are provided by residues 99–107 (FTPGAEGFA) and Lys-122. Asp-206 acts as the Proton acceptor in catalysis.

Belongs to the protein kinase superfamily. Ser/Thr protein kinase family. Post-translationally, phosphorylated by ORF47; this phosphorylation regulates subsequent phosphorylation of proteins 24 and 27 by ORF66. Autophosphorylated.

Its subcellular location is the host cytoplasm. It is found in the host nucleus. It catalyses the reaction L-seryl-[protein] + ATP = O-phospho-L-seryl-[protein] + ADP + H(+). The enzyme catalyses L-threonyl-[protein] + ATP = O-phospho-L-threonyl-[protein] + ADP + H(+). Functionally, multifunctional serine/threonine kinase that plays a role in several processes including egress of virus particles from the nucleus, modulation of the actin cytoskeleton and inhibition of apoptosis. Phosphorylates proteins 24 and 27, two critical regulators of capsid budding from nucleus to endoplasmic reticulum, thereby facilitating virion egress. Modulates and redistributes host components of the nuclear envelope, including LMNA, emerin/EMD and the nuclear matrix protein MATR3. Phosphorylates envelope glycoprotein B (gB), probably to direct it to the cell surface. Promotes virus intracellular spread by restructuring host cell cytoskeleton. Blocks host apoptosis to extend cell survival and allow efficient viral replication. Promotes viral gene expression by phosphorylating host HDAC2 to reduce viral genome silencing. Down-regulates class I major histocompatibility complex (MHC-I) surface expression. Additionally, phosphorylates IE62 and targets it to the cytoplasm. The nuclear exclusion of IE62 enables the packaging of abundant levels of IE62 into virions. The protein is Serine/threonine-protein kinase US3 homolog (66) of Varicella-zoster virus (strain Dumas) (HHV-3).